Here is a 314-residue protein sequence, read N- to C-terminus: 2,3-dihydroxyphenylpropionate/2,3-dihydroxicinnamic acid 1,2-dioxygenase (314 aa).

Residue His115 is the Proton donor of the active site. His179 serves as the catalytic Proton acceptor.

This sequence belongs to the LigB/MhpB extradiol dioxygenase family. In terms of assembly, homotetramer. It depends on Fe(2+) as a cofactor.

The enzyme catalyses 3-(2,3-dihydroxyphenyl)propanoate + O2 = (2Z,4E)-2-hydroxy-6-oxonona-2,4-dienedioate + H(+). The catalysed reaction is (2E)-3-(2,3-dihydroxyphenyl)prop-2-enoate + O2 = (2Z,4E,7E)-2-hydroxy-6-oxonona-2,4,7-trienedioate + H(+). It participates in aromatic compound metabolism; 3-phenylpropanoate degradation. Functionally, catalyzes the non-heme iron(II)-dependent oxidative cleavage of 2,3-dihydroxyphenylpropionic acid and 2,3-dihydroxicinnamic acid into 2-hydroxy-6-ketononadienedioate and 2-hydroxy-6-ketononatrienedioate, respectively. The chain is 2,3-dihydroxyphenylpropionate/2,3-dihydroxicinnamic acid 1,2-dioxygenase from Escherichia coli O139:H28 (strain E24377A / ETEC).